We begin with the raw amino-acid sequence, 64 residues long: Prokaryotic ubiquitin-like protein Pup (64 aa).

The tract at residues M1–G35 is disordered. Residues E21 to V33 are compositionally biased toward polar residues. The ARC ATPase binding stretch occupies residues E21–Y58. Q64 carries the deamidated glutamine modification. Q64 participates in a covalent cross-link: Isoglutamyl lysine isopeptide (Gln-Lys) (interchain with K-? in acceptor proteins).

This sequence belongs to the prokaryotic ubiquitin-like protein family. Strongly interacts with the proteasome-associated ATPase ARC through a hydrophobic interface; the interacting region of Pup lies in its C-terminal half. There is one Pup binding site per ARC hexamer ring. Is modified by deamidation of its C-terminal glutamine to glutamate by the deamidase Dop, a prerequisite to the subsequent pupylation process.

It participates in protein degradation; proteasomal Pup-dependent pathway. In terms of biological role, protein modifier that is covalently attached to lysine residues of substrate proteins, thereby targeting them for proteasomal degradation. The tagging system is termed pupylation. The chain is Prokaryotic ubiquitin-like protein Pup from Corynebacterium jeikeium (strain K411).